Consider the following 637-residue polypeptide: DNA mismatch repair protein MutL (637 aa).

Residues Gly353–Ala371 show a composition bias toward polar residues. The disordered stretch occupies residues Gly353–Asp444. Positions Asp378–Trp389 are enriched in basic and acidic residues. The segment covering Pro396–Gly406 has biased composition (pro residues). The span at Ser430 to Asp444 shows a compositional bias: basic and acidic residues.

It belongs to the DNA mismatch repair MutL/HexB family.

Its function is as follows. This protein is involved in the repair of mismatches in DNA. It is required for dam-dependent methyl-directed DNA mismatch repair. May act as a 'molecular matchmaker', a protein that promotes the formation of a stable complex between two or more DNA-binding proteins in an ATP-dependent manner without itself being part of a final effector complex. In Beijerinckia indica subsp. indica (strain ATCC 9039 / DSM 1715 / NCIMB 8712), this protein is DNA mismatch repair protein MutL.